Consider the following 362-residue polypeptide: Ciliary neurotrophic factor receptor subunit alpha (362 aa).

Residues 1–19 form the signal peptide; the sequence is MANPVPSACCVVLAAVVVV. One can recognise an Ig-like C2-type domain in the interval 23-103; sequence RHSQQDSHIQ…HLKYQTYLRV (81 aa). Cysteines 44 and 87 form a disulfide. N-linked (GlcNAc...) asparagine glycans are attached at residues Asn58, Asn68, Asn140, and Asn188. Fibronectin type-III domains follow at residues 106–203 and 204–304; these read PPKE…VKPD and PPES…TEEP. Positions 288 to 292 match the WSXWS motif motif; it reads WSDWS. Asp334 carries GPI-anchor amidated aspartate lipidation. Positions 335–362 are cleaved as a propeptide — removed in mature form; it reads KGAGVGSGAVAVCWTAGLVLAAYGVLFI.

This sequence belongs to the type I cytokine receptor family. Type 3 subfamily. In terms of assembly, heterotrimer of the alpha subunit, LIFR and IL6ST. In terms of tissue distribution, highly expressed in nervous system. Also found in skeletal muscle.

It localises to the cell membrane. In terms of biological role, binds to CNTF (GPA). The alpha subunit provides the receptor specificity. The chain is Ciliary neurotrophic factor receptor subunit alpha (CNTFR) from Gallus gallus (Chicken).